Consider the following 334-residue polypeptide: MKAIEWRDNRLIILDQTLLPLEEKYLELNDYHAVAEAIKTLRVRGAPSIGVAAAYGIALGALGIETQYCSEFLPLYQQVSAEIASTRPTAKNLFMAAERMDHVVASGTDVSQVKISLVEEAVKIHHEEEEASRKISAFGAELIQPGWTVLTHCNAGPLATAGYGTALGVIIAAHQQGKNISAFATETRPLLQGARLTALELKEAGIPFKLITDSMAGHFMQKGVINAVVVGADRIAKNGDTANKIGTYSLAVLALAHGIPFYVAAPSSTFDKSIESGRDIVIEERKPEEITQIRGQRIAPENIAVANPAFDVTPANLITAFITENGIIRREAKN.

Residues R44 to A46, R87, and Q192 each bind substrate. The active-site Proton donor is D233. N243 to K244 contacts substrate.

This sequence belongs to the eIF-2B alpha/beta/delta subunits family. MtnA subfamily.

It catalyses the reaction 5-(methylsulfanyl)-alpha-D-ribose 1-phosphate = 5-(methylsulfanyl)-D-ribulose 1-phosphate. Its pathway is amino-acid biosynthesis; L-methionine biosynthesis via salvage pathway; L-methionine from S-methyl-5-thio-alpha-D-ribose 1-phosphate: step 1/6. Functionally, catalyzes the interconversion of methylthioribose-1-phosphate (MTR-1-P) into methylthioribulose-1-phosphate (MTRu-1-P). The chain is Methylthioribose-1-phosphate isomerase from Dehalococcoides mccartyi (strain ATCC BAA-2266 / KCTC 15142 / 195) (Dehalococcoides ethenogenes (strain 195)).